The sequence spans 402 residues: Putative cytochrome P450 133B1 (402 aa).

C348 serves as a coordination point for heme.

It belongs to the cytochrome P450 family. Heme is required as a cofactor.

This Xylella fastidiosa (strain 9a5c) protein is Putative cytochrome P450 133B1 (cyp133B1).